Here is a 423-residue protein sequence, read N- to C-terminus: UPF0597 protein Emin_0811 (423 aa).

Belongs to the UPF0597 family.

This Elusimicrobium minutum (strain Pei191) protein is UPF0597 protein Emin_0811.